The sequence spans 396 residues: Tyrosine--tRNA ligase (396 aa).

Residue tyrosine 36 participates in L-tyrosine binding. Positions 41–50 (PTANSLHIGN) match the 'HIGH' region motif. L-tyrosine-binding residues include tyrosine 165 and glutamine 169. The 'KMSKS' region motif lies at 225–229 (KMGKT). Position 228 (lysine 228) interacts with ATP. The S4 RNA-binding domain occupies 331–394 (TNLIDYLVET…KKSFLTIKTV (64 aa)).

This sequence belongs to the class-I aminoacyl-tRNA synthetase family. TyrS type 1 subfamily. Homodimer.

It is found in the cytoplasm. It catalyses the reaction tRNA(Tyr) + L-tyrosine + ATP = L-tyrosyl-tRNA(Tyr) + AMP + diphosphate + H(+). Functionally, catalyzes the attachment of tyrosine to tRNA(Tyr) in a two-step reaction: tyrosine is first activated by ATP to form Tyr-AMP and then transferred to the acceptor end of tRNA(Tyr). In Mycoplasma genitalium (strain ATCC 33530 / DSM 19775 / NCTC 10195 / G37) (Mycoplasmoides genitalium), this protein is Tyrosine--tRNA ligase.